The chain runs to 426 residues: FK506-binding protein 3 (426 aa).

Disordered stretches follow at residues Ser-37–Gln-143 and Thr-171–Lys-314. 3 stretches are compositionally biased toward acidic residues: residues Asp-65–Glu-94, Glu-111–Ser-131, and Gln-181–Glu-225. 3 stretches are compositionally biased toward basic and acidic residues: residues Gly-226–Ser-257, Lys-264–Glu-278, and Val-287–Lys-311. The region spanning Gly-340–Lys-426 is the PPIase FKBP-type domain.

The protein belongs to the FKBP-type PPIase family. FKBP3/4 subfamily.

The protein resides in the nucleus. It is found in the nucleolus. The enzyme catalyses [protein]-peptidylproline (omega=180) = [protein]-peptidylproline (omega=0). Its activity is regulated as follows. Inhibited by both FK506 and rapamycin. PPIases accelerate the folding of proteins. It catalyzes the cis-trans isomerization of proline imidic peptide bonds in oligopeptides. The polypeptide is FK506-binding protein 3 (FPR3) (Candida albicans (strain SC5314 / ATCC MYA-2876) (Yeast)).